Reading from the N-terminus, the 381-residue chain is Dihydroorotate dehydrogenase (quinone) (381 aa).

Residues 74–78 and threonine 98 each bind FMN; that span reads AGFDK. Residue lysine 78 coordinates substrate. 123–127 is a substrate binding site; sequence NRMGF. 2 residues coordinate FMN: asparagine 152 and asparagine 185. Asparagine 185 is a binding site for substrate. Catalysis depends on serine 188, which acts as the Nucleophile. Position 190 (asparagine 190) interacts with substrate. FMN-binding residues include lysine 223 and threonine 251. 252–253 is a substrate binding site; it reads NT. FMN is bound by residues glycine 289, glycine 318, and 339–340; that span reads YT. Residues 359–381 form a disordered region; that stretch reads RSSPPSPDVTLPPENTPVGQIQA.

It belongs to the dihydroorotate dehydrogenase family. Type 2 subfamily. Monomer. The cofactor is FMN.

It localises to the cell membrane. The enzyme catalyses (S)-dihydroorotate + a quinone = orotate + a quinol. It participates in pyrimidine metabolism; UMP biosynthesis via de novo pathway; orotate from (S)-dihydroorotate (quinone route): step 1/1. Its function is as follows. Catalyzes the conversion of dihydroorotate to orotate with quinone as electron acceptor. In Synechococcus sp. (strain JA-2-3B'a(2-13)) (Cyanobacteria bacterium Yellowstone B-Prime), this protein is Dihydroorotate dehydrogenase (quinone).